Here is a 293-residue protein sequence, read N- to C-terminus: 4-hydroxy-tetrahydrodipicolinate synthase (293 aa).

Position 45 (Ser45) interacts with pyruvate. The active-site Proton donor/acceptor is Tyr133. Lys161 serves as the catalytic Schiff-base intermediate with substrate. Residue Ile203 coordinates pyruvate.

The protein belongs to the DapA family. Homotetramer; dimer of dimers.

Its subcellular location is the cytoplasm. It carries out the reaction L-aspartate 4-semialdehyde + pyruvate = (2S,4S)-4-hydroxy-2,3,4,5-tetrahydrodipicolinate + H2O + H(+). Its pathway is amino-acid biosynthesis; L-lysine biosynthesis via DAP pathway; (S)-tetrahydrodipicolinate from L-aspartate: step 3/4. In terms of biological role, catalyzes the condensation of (S)-aspartate-beta-semialdehyde [(S)-ASA] and pyruvate to 4-hydroxy-tetrahydrodipicolinate (HTPA). This Psychromonas ingrahamii (strain DSM 17664 / CCUG 51855 / 37) protein is 4-hydroxy-tetrahydrodipicolinate synthase.